The sequence spans 717 residues: Pre-mRNA-splicing factor ATP-dependent RNA helicase DEAH10 (717 aa).

The segment at Met-1–Ser-29 is disordered. A compositionally biased stretch (polar residues) spans Phe-12–Ser-29. Positions Val-51 to Gln-256 constitute a Helicase ATP-binding domain. Residue Gly-64–Thr-71 coordinates ATP. A DEAH box motif is present at residues Asp-162–His-165. The Helicase C-terminal domain maps to Thr-278 to Gly-453.

The protein belongs to the DEAD box helicase family. DEAH subfamily. PRP22 sub-subfamily. Widely expressed but spatially and temporally regulated during development.

It localises to the nucleus. The protein resides in the nucleolus. It catalyses the reaction ATP + H2O = ADP + phosphate + H(+). Its function is as follows. Involved in pre-mRNA splicing. Plays a role during development in processes such as meristem maintenance, leaf morphogenesis and root morphogenesis. This is Pre-mRNA-splicing factor ATP-dependent RNA helicase DEAH10 from Arabidopsis thaliana (Mouse-ear cress).